The primary structure comprises 475 residues: Ribulose bisphosphate carboxylase large chain (475 aa).

A propeptide spanning residues 1-2 is cleaved from the precursor; that stretch reads MS. At P3 the chain carries N-acetylproline. The residue at position 14 (K14) is an N6,N6,N6-trimethyllysine. Residues N123 and T173 each coordinate substrate. K175 (proton acceptor) is an active-site residue. Substrate is bound at residue K177. The Mg(2+) site is built by K201, D203, and E204. K201 bears the N6-carboxylysine mark. Catalysis depends on H294, which acts as the Proton acceptor. The substrate site is built by R295, H327, and S379.

The protein belongs to the RuBisCO large chain family. Type I subfamily. As to quaternary structure, heterohexadecamer of 8 large chains and 8 small chains; disulfide-linked. The disulfide link is formed within the large subunit homodimers. Mg(2+) is required as a cofactor. In terms of processing, the disulfide bond which can form in the large chain dimeric partners within the hexadecamer appears to be associated with oxidative stress and protein turnover.

Its subcellular location is the plastid. It is found in the chloroplast. The enzyme catalyses 2 (2R)-3-phosphoglycerate + 2 H(+) = D-ribulose 1,5-bisphosphate + CO2 + H2O. The catalysed reaction is D-ribulose 1,5-bisphosphate + O2 = 2-phosphoglycolate + (2R)-3-phosphoglycerate + 2 H(+). RuBisCO catalyzes two reactions: the carboxylation of D-ribulose 1,5-bisphosphate, the primary event in carbon dioxide fixation, as well as the oxidative fragmentation of the pentose substrate in the photorespiration process. Both reactions occur simultaneously and in competition at the same active site. The protein is Ribulose bisphosphate carboxylase large chain of Chlorokybus atmophyticus (Soil alga).